The following is a 622-amino-acid chain: Polygalacturonase 1 beta-like protein 1 (622 aa).

The first 21 residues, 1–21 (MRKQFVFLLPFLSRLYHVVIA), serve as a signal peptide directing secretion. An FXXY 1 repeat occupies 118-121 (FSVY). Residue N125 is glycosylated (N-linked (GlcNAc...) asparagine). 11 FXXY repeats span residues 126-129 (FTNY), 140-143 (FKKY), 154-157 (FRRY), 168-171 (FTGY), 182-185 (FNSY), 196-199 (FKNY), 210-213 (FKAY), 224-227 (FKTY), 239-242 (FTSY), 253-256 (FSSY), and 267-270 (FSNY). N-linked (GlcNAc...) asparagine glycosylation occurs at N278. 7 FXXY repeats span residues 281–284 (FKGY), 295–298 (FKSY), 309–312 (FLNY), 323–326 (FSSY), 337–340 (FVNY), 351–354 (FSGY), and 365–368 (FKTY). N-linked (GlcNAc...) asparagine glycosylation occurs at N371. 2 FXXY repeats span residues 374-377 (FKDY) and 384-387 (FAKY). 2 N-linked (GlcNAc...) asparagine glycosylation sites follow: N388 and N461. The BURP domain maps to 407–621 (FFRESMLKEG…FENDMNWAIA (215 aa)).

In terms of tissue distribution, expressed in flowers and stems.

It is found in the secreted. The protein resides in the extracellular space. It localises to the apoplast. The protein localises to the cell wall. Involved in cell size determination. This is Polygalacturonase 1 beta-like protein 1 from Arabidopsis thaliana (Mouse-ear cress).